The sequence spans 236 residues: Outer membrane protein P.III (236 aa).

Positions 1 to 22 are cleaved as a signal peptide; sequence MTKQLKLSALFVALLASGTAVA. 4 repeat units span residues 69 to 70, 71 to 72, 73 to 74, and 75 to 76. The 4 X 2 AA tandem repeats of X-P stretch occupies residues 69 to 76; sequence VPEPEPAP. Positions 86 to 223 constitute an OmpA-like domain; the sequence is YVDETISLSA…RVDVKIRSIV (138 aa). Residues Cys-185 and Cys-208 are joined by a disulfide bond.

Belongs to the outer membrane OOP (TC 1.B.6) superfamily.

The protein resides in the cell outer membrane. This is Outer membrane protein P.III from Neisseria gonorrhoeae.